A 186-amino-acid polypeptide reads, in one-letter code: Allergen Fel d 4 (186 aa).

Residues 1–15 (MKLLLLCLGLILVCA) form the signal peptide. N-linked (GlcNAc...) asparagine glycans are attached at residues N51 and N66. An intrachain disulfide couples C81 to C171.

It belongs to the calycin superfamily. Lipocalin family. As to expression, abundant in urine (at protein level).

It is found in the secreted. Functionally, may be a pheromone carrier. Acts as a kairomone, detected by the prey vomeronasal organ and inducing fear reactions in mice. The sequence is that of Allergen Fel d 4 from Felis catus (Cat).